The chain runs to 557 residues: Polypyrimidine tract-binding protein 1 (557 aa).

An N-acetylmethionine modification is found at methionine 1. A Phosphoserine modification is found at serine 16. RRM domains lie at 59 to 143 (RVIH…SSPN), 184 to 260 (LRII…FSKL), and 363 to 437 (SVLL…LSKH). Residue lysine 65 forms a Glycyl lysine isopeptide (Lys-Gly) (interchain with G-Cter in SUMO2) linkage. Tyrosine 127 carries the post-translational modification Phosphotyrosine. Threonine 138 is subject to Phosphothreonine. The residue at position 141 (serine 141) is a Phosphoserine. Lysine 218 is covalently cross-linked (Glycyl lysine isopeptide (Lys-Gly) (interchain with G-Cter in SUMO2)). Serine 459 carries the post-translational modification Phosphoserine. The 76-residue stretch at 480-555 (ATLHLSNIPP…HHLRVSFSKS (76 aa)) folds into the RRM 4 domain.

In terms of assembly, monomer. Part of a ternary complex containing KHSRP, PTBP1, PTBP2 and HNRPH1. Interacts with RAVER1 and SFPQ. Interacts with IVNS1ABP (via BACK domain); the interaction is direct.

It is found in the nucleus. Functionally, plays a role in pre-mRNA splicing and in the regulation of alternative splicing events. Activates exon skipping of its own pre-mRNA during muscle cell differentiation. Binds to the polypyrimidine tract of introns. May promote RNA looping when bound to two separate polypyrimidine tracts in the same pre-mRNA. May promote the binding of U2 snRNP to pre-mRNA. Cooperates with RAVER1 to modulate switching between mutually exclusive exons during maturation of the TPM1 pre-mRNA. Represses the splicing of MAPT/Tau exon 10. Binds to polypyrimidine-rich controlling element (PCE) of CFTR and promotes exon skipping of CFTR exon 9, thereby antagonizing TIA1 and its role in exon inclusion of CFTR exon 9. Plays a role in the splicing of pyruvate kinase PKM by binding repressively to a polypyrimidine tract flanking PKM exon 9, inhibiting exon 9 inclusion and resulting in exon 10 inclusion and production of the PKM M2 isoform. In case of infection by picornaviruses, binds to the viral internal ribosome entry site (IRES) and stimulates the IRES-mediated translation. The chain is Polypyrimidine tract-binding protein 1 (PTBP1) from Homo sapiens (Human).